Reading from the N-terminus, the 462-residue chain is MTTEIRALYTRLPAIDRLLRDPAFSPLLAQHGHSQVVAQLRQMLDEAREQISQRQTLPDWSHDWQHACEQRLTAGQRSALRPVFNLTGTVLHTNLGRAIQAESAVEAVASAMRAPVTLEYDLDDAGRGHRDRAIADLLCQITGAEDACIVNNNAAAVLLMLAATASGREVVVSRGELVEIGGAFRIPDVMRQAGCQLHEVGTTNRTHAKDYRQAVNDNTALLMKVHTSNYSIEGFTKAVDEAELAAIGRELDVPVVADLGSGSLVDLSQYGLPKEPMPQEMIAAGVSLVSFSGDKLLGGPQAGIIVGKRALIAQLQSHPLKRALRADKMTLAALEATLRLYQHPEALREKLPTLRLLTRPAEEIRRLAERLQPDLAAHYADFAVSVAACQSQIGSGSLPVDRLPSAALTFTPHDGRGSRLEALAARWRALPCPVIGRIYDGRLWLDLRCLEDETRFMEMLLR.

At Lys-295 the chain carries N6-(pyridoxal phosphate)lysine.

This sequence belongs to the SelA family. In terms of assembly, homodecamer; pentamer of dimers. Binds only one seryl-tRNA(Sec) per dimer. It depends on pyridoxal 5'-phosphate as a cofactor.

It is found in the cytoplasm. It carries out the reaction L-seryl-tRNA(Sec) + selenophosphate + H(+) = L-selenocysteinyl-tRNA(Sec) + phosphate. It functions in the pathway aminoacyl-tRNA biosynthesis; selenocysteinyl-tRNA(Sec) biosynthesis; selenocysteinyl-tRNA(Sec) from L-seryl-tRNA(Sec) (bacterial route): step 1/1. In terms of biological role, converts seryl-tRNA(Sec) to selenocysteinyl-tRNA(Sec) required for selenoprotein biosynthesis. The polypeptide is L-seryl-tRNA(Sec) selenium transferase (Klebsiella pneumoniae subsp. pneumoniae (strain ATCC 700721 / MGH 78578)).